A 338-amino-acid polypeptide reads, in one-letter code: MIQKNWQELTKPNKLEVISGDDPKRFATIVAGPLELGFGLTLGNSLRRILLSSLQGAAITSVHIDGVLHEFSSIPGVREDVTDIVLNIKDIAIKMPGDGPKRLVLKKQGPGKVTAGDIQTSGDISILNPGLVICTLDEGAEIRMEFTVHTGKGYVAADRNRAEDAPIGLIPIDSLYSPVKKVSYRVENTREGQNLDLDKLTLQVETNGALTPEDAVAFAARILQDQLNVFVNFEEPRRVEATPSIPELAFNPALLKKVDELELSVRSANCLKNDNIVYIGDLIQKSEGEMLRTPNFGRKSLNEIKEVLAQMGLHLGMEVNGWPPDNIDDLAKRFEEHY.

The segment at 1–234 (MIQKNWQELT…DQLNVFVNFE (234 aa)) is alpha N-terminal domain (alpha-NTD). Residues 250–338 (FNPALLKKVD…DLAKRFEEHY (89 aa)) form an alpha C-terminal domain (alpha-CTD) region.

It belongs to the RNA polymerase alpha chain family. As to quaternary structure, homodimer. The RNAP catalytic core consists of 2 alpha, 1 beta, 1 beta' and 1 omega subunit. When a sigma factor is associated with the core the holoenzyme is formed, which can initiate transcription.

The enzyme catalyses RNA(n) + a ribonucleoside 5'-triphosphate = RNA(n+1) + diphosphate. Its function is as follows. DNA-dependent RNA polymerase catalyzes the transcription of DNA into RNA using the four ribonucleoside triphosphates as substrates. This Methylocella silvestris (strain DSM 15510 / CIP 108128 / LMG 27833 / NCIMB 13906 / BL2) protein is DNA-directed RNA polymerase subunit alpha.